A 324-amino-acid polypeptide reads, in one-letter code: Palmitoyltransferase SWF1 (324 aa).

A topological domain (lumenal) is located at residue Met-1. A helical membrane pass occupies residues 2 to 22; it reads FLLFLLFVVSQVGLLVFSPKF. Topologically, residues 23-49 are cytoplasmic; it reads KDLILFRWYYQHIYYPLFTDYTRYRWK. A helical transmembrane segment spans residues 50 to 70; it reads YWLVPGFYACILIFCVHLFYN. Residues 71–84 lie on the Lumenal side of the membrane; the sequence is KLNDTVNPYLYSLE. Residues 85–105 form a helical membrane-spanning segment; sequence KAFIPITIAFTSLTGVASVFV. Residues 106–173 are Cytoplasmic-facing; it reads KPLGLQAGPQ…VGYGNYEYFY (68 aa). A DHHC domain is found at 127–177; sequence AVCQTCKTIKVPRSKHCPICERCIPLHDHHCIWINNCVGYGNYEYFYSFLL. The helical transmembrane segment at 174 to 194 threads the bilayer; it reads SFLLSNCLLLTYASLRLLTLF. Topologically, residues 195–203 are lumenal; it reads RITAFKKDK. Residues 204–224 traverse the membrane as a helical segment; sequence FFLSLFLLTTAFSLIAIVFTY. Residues 225–324 are Cytoplasmic-facing; the sequence is YQLKLVNDGM…NLKERIHLLD (100 aa).

The protein belongs to the DHHC palmitoyltransferase family. SWF1 subfamily.

The protein resides in the endoplasmic reticulum membrane. The catalysed reaction is L-cysteinyl-[protein] + hexadecanoyl-CoA = S-hexadecanoyl-L-cysteinyl-[protein] + CoA. In terms of biological role, palmitoyltransferase that targets several endosomal SNAREs. Palmitoylates the SNAREs at cysteine residues close to the cytoplasmic end of their transmembrane domain. May have a role in the cellular quality control of transmembrane domain-containing proteins. This is Palmitoyltransferase SWF1 (SWF1) from Kluyveromyces lactis (strain ATCC 8585 / CBS 2359 / DSM 70799 / NBRC 1267 / NRRL Y-1140 / WM37) (Yeast).